Here is a 609-residue protein sequence, read N- to C-terminus: UvrABC system protein C (609 aa).

Residues 16 to 94 (SSAGVYRMYD…IKQYMPKYNV (79 aa)) form the GIY-YIG domain. The UVR domain maps to 203-238 (QQVISALVDKMELAAERQAYEQAARFRDQIMALRKV).

Belongs to the UvrC family. As to quaternary structure, interacts with UvrB in an incision complex.

The protein localises to the cytoplasm. Functionally, the UvrABC repair system catalyzes the recognition and processing of DNA lesions. UvrC both incises the 5' and 3' sides of the lesion. The N-terminal half is responsible for the 3' incision and the C-terminal half is responsible for the 5' incision. The sequence is that of UvrABC system protein C from Shewanella baltica (strain OS185).